We begin with the raw amino-acid sequence, 116 residues long: Protein TRACHEARY ELEMENT DIFFERENTIATION-RELATED 6 (116 aa).

The Extracellular segment spans residues 1 to 24; that stretch reads MASTDSVYRPTPTPDHDTTVVVVV. A helical membrane pass occupies residues 25–45; sequence FVSLGCVMFLAFLAFVIWFLI. Topologically, residues 46–116 are cytoplasmic; it reads KKRSRKHRER…GVGSSVVSRS (71 aa).

As to quaternary structure, interacts with CESA7/IRX3, a subunit of the secondary cell wall (SCW)-related cellulose synthase complex. In terms of tissue distribution, expressed preferentially in differentiating vessel elements in seedlings.

It is found in the cell membrane. The protein localises to the secreted. It localises to the cell wall. Functionally, involved in the secondary cell wall (SCW) formation of vessel elements (e.g. protoxylem and metaxylem), thus promoting tracheary element (TE) differentiation. The chain is Protein TRACHEARY ELEMENT DIFFERENTIATION-RELATED 6 from Arabidopsis thaliana (Mouse-ear cress).